The chain runs to 518 residues: GRIN2-like protein (518 aa).

2 disordered regions span residues 1–23 (MGLESVVQTMNNQSPDNNSQSRT) and 467–500 (QTEPAQQTGKSDEDPLNKEPSSDKMEKKRPFRTM). A compositionally biased stretch (basic and acidic residues) spans 476 to 494 (KSDEDPLNKEPSSDKMEKK).

In terms of assembly, may interact with GNAO1.

Its function is as follows. May be involved in neurite outgrowth. The sequence is that of GRIN2-like protein from Gallus gallus (Chicken).